The following is a 448-amino-acid chain: MANVVENLGKLERRVTISLPKDTVQKEIDARIQKLAKTVRMPGFRPGKVPVKMVAQQYAGQVEAEVLSDKIGQEFFTISRAENLRVAGQPSFEPKQEQAEGAYAFDATFEVYPEVKIGDLATAEVERSTTSIGDAEIDRTLDILRKQRVHFHARGEAGEHGDGGADTAAKNGDRVTVDFVGKIDDVAFQGGTAEDFPFVLGEGRMLPEFETAALGLKVGESRTFDLAFPEDYHGKDVAGKTAQFTVTMKKIEWPHLPEIDGEFAKSLGIEDGDLTKMRGEIKDNLEREAKRRTQSIVKNQVMDALLKISELDVPKALIEQDQQRLVEMARQDLAQRGVPNAKDAPIPAEMFTEQAERRVKLGLVLAELVKSNGLEAKPEQIRAEVDEFAKSYEDPKEVVRWYYSNQQRLAEMEAFVVESNVVDFVLGKAKVTDKEVSFEALASASAQA.

In terms of domain architecture, PPIase FKBP-type spans 172 to 257 (GDRVTVDFVG…MKKIEWPHLP (86 aa)).

The protein belongs to the FKBP-type PPIase family. Tig subfamily.

It localises to the cytoplasm. The catalysed reaction is [protein]-peptidylproline (omega=180) = [protein]-peptidylproline (omega=0). Functionally, involved in protein export. Acts as a chaperone by maintaining the newly synthesized protein in an open conformation. Functions as a peptidyl-prolyl cis-trans isomerase. The sequence is that of Trigger factor from Burkholderia lata (strain ATCC 17760 / DSM 23089 / LMG 22485 / NCIMB 9086 / R18194 / 383).